The sequence spans 206 residues: Small ribosomal subunit protein uS4 (206 aa).

Positions 96 to 156 (GRLDNVVYRM…EKAKKQARIK (61 aa)) constitute an S4 RNA-binding domain.

The protein belongs to the universal ribosomal protein uS4 family. In terms of assembly, part of the 30S ribosomal subunit. Contacts protein S5. The interaction surface between S4 and S5 is involved in control of translational fidelity.

Its function is as follows. One of the primary rRNA binding proteins, it binds directly to 16S rRNA where it nucleates assembly of the body of the 30S subunit. With S5 and S12 plays an important role in translational accuracy. The chain is Small ribosomal subunit protein uS4 from Aeromonas salmonicida (strain A449).